Here is a 1023-residue protein sequence, read N- to C-terminus: Hemolysin, chromosomal (1023 aa).

3 helical membrane-spanning segments follow: residues I237–N259, K267–A326, and D364–E410. Residues K563 and K689 are each lipidated (N6-myristoyl lysine). Hemolysin-type calcium-binding repeat units follow at residues F731–I748, E749–L766, S767–L784, I785–L802, S815–L832, and D833–Y850. A compositionally biased stretch (basic and acidic residues) spans H747–N763. Positions H747–G780 are disordered.

This sequence belongs to the RTX prokaryotic toxin (TC 1.C.11) family. Post-translationally, myristoylated by HlyC; the toxin only becomes active when modified. Mainly myristoylated, while a minor fraction is acylated with pentadecanoyl (C15:0; 26%) and heptadecanoyl (C17:0; 6%) fatty acyl groups. Fatty acylation is involved in binding to host membranes and promotes the irreversible insertion of Hemolysin into the host cell membrane. Can be activated by both myristoylation and palmitoylation, but HlyC catalyzes lysine myristoylation.

It localises to the secreted. The protein localises to the host cell membrane. Bacterial hemolysins are exotoxins that attack blood cell membranes and cause cell rupture by forming a pore. This is Hemolysin, chromosomal from Escherichia coli.